A 205-amino-acid polypeptide reads, in one-letter code: Recombination protein RecR (205 aa).

The C4-type zinc-finger motif lies at 58 to 75 (CSECQNVTDRDSDPCVLC). The Toprim domain occupies 83–182 (TVICVVESPV…AVSKIARGIP (100 aa)).

It belongs to the RecR family.

Functionally, may play a role in DNA repair. It seems to be involved in an RecBC-independent recombinational process of DNA repair. It may act with RecF and RecO. This is Recombination protein RecR from Chlorobium phaeobacteroides (strain DSM 266 / SMG 266 / 2430).